Consider the following 224-residue polypeptide: Type II restriction enzyme BstVI (224 aa).

It belongs to the XhoI type II restriction endonuclease family.

The enzyme catalyses Endonucleolytic cleavage of DNA to give specific double-stranded fragments with terminal 5'-phosphates.. A P subtype restriction enzyme that recognizes the double-stranded sequence 5'-CTCGAG-3' and cleaves after C-1. The protein is Type II restriction enzyme BstVI of Geobacillus stearothermophilus (Bacillus stearothermophilus).